The primary structure comprises 261 residues: Glutathione S-transferase theta-1 (261 aa).

Positions 2 to 101 (GLELYLDLLS…YLSRKYNTPD (100 aa)) constitute a GST N-terminal domain. Residues 72 to 73 (KV) and 85 to 86 (EC) each bind glutathione. The 142-residue stretch at 107–248 (DIKKRAQVDE…LSNIQIDPQL (142 aa)) folds into the GST C-terminal domain.

The protein belongs to the GST superfamily. Theta family. Homodimer.

It localises to the cytoplasm. The enzyme catalyses RX + glutathione = an S-substituted glutathione + a halide anion + H(+). Conjugation of reduced glutathione to a wide number of exogenous and endogenous hydrophobic electrophiles. This is Glutathione S-transferase theta-1 (GSTT1) from Gallus gallus (Chicken).